A 685-amino-acid polypeptide reads, in one-letter code: Phenoloxidase subunit 1 (685 aa).

Cu cation is bound by residues His209, His213, and His239. The active-site Proton acceptor is Glu351. Cu cation-binding residues include His366, His370, and His406. Disulfide bonds link Cys580-Cys622 and Cys582-Cys629.

In terms of assembly, heterodimer. Forms a complex with an interleukin 1-like protein as a consequence of a host defense response. Requires Cu(2+) as cofactor. In terms of processing, the N-terminus is blocked. As to expression, synthesized by oenocytoids, a type of hemocyte, and released into the hemolymph plasma.

It localises to the secreted. It carries out the reaction 2 L-dopa + O2 = 2 L-dopaquinone + 2 H2O. It catalyses the reaction L-tyrosine + O2 = L-dopaquinone + H2O. Its activity is regulated as follows. Activated by immulectin and lipopolysaccharide. This is a copper-containing oxidase that functions in the formation of pigments such as melanins and other polyphenolic compounds. Catalyzes the rate-limiting conversions of tyrosine to DOPA, DOPA to DOPA-quinone and possibly 5,6 dihydroxyindole to indole-5'6 quinone. Binds to the surface of hemocytes and is involved in hemocyte melanization. The protein is Phenoloxidase subunit 1 of Manduca sexta (Tobacco hawkmoth).